Consider the following 144-residue polypeptide: MPPKKKKITAIIKLQINAGKATPAPPVGPALGQHGVNIMEFCKQYNAATESQAGNVVPVEITVYEDRSFTFVTKTPPAARLILKAAGVEKGSGTPHRDKVAKLTPAQVREIAQTKLPDLNATTIEAAEKIIAGTARSMGITVGD.

The protein belongs to the universal ribosomal protein uL11 family. Part of the ribosomal stalk of the 50S ribosomal subunit. Interacts with L10 and the large rRNA to form the base of the stalk. L10 forms an elongated spine to which L12 dimers bind in a sequential fashion forming a multimeric L10(L12)X complex. Post-translationally, one or more lysine residues are methylated.

In terms of biological role, forms part of the ribosomal stalk which helps the ribosome interact with GTP-bound translation factors. This is Large ribosomal subunit protein uL11 from Frankia alni (strain DSM 45986 / CECT 9034 / ACN14a).